The following is a 67-amino-acid chain: DNA-directed RNA polymerases I, II, and III subunit RPABC5 (67 aa).

Zn(2+) contacts are provided by Cys7, Cys10, Cys44, and Cys45.

The protein belongs to the archaeal Rpo10/eukaryotic RPB10 RNA polymerase subunit family. As to quaternary structure, component of the RNA polymerase I (Pol I), RNA polymerase II (Pol II) and RNA polymerase III (Pol III) complexes consisting of at least 13, 12 and 17 subunits, respectively.

It is found in the nucleus. Functionally, DNA-dependent RNA polymerase catalyzes the transcription of DNA into RNA using the four ribonucleoside triphosphates as substrates. Common component of RNA polymerases I, II and III which synthesize ribosomal RNA precursors, mRNA precursors and many functional non-coding RNAs, and a small RNAs, such as 5S rRNA and tRNAs, respectively. Pol II is the central component of the basal RNA polymerase II transcription machinery. Pols are composed of mobile elements that move relative to each other. In Pol II, Polr2L is part of the core element with the central large cleft. This Drosophila melanogaster (Fruit fly) protein is DNA-directed RNA polymerases I, II, and III subunit RPABC5.